A 454-amino-acid chain; its full sequence is CBL-interacting protein kinase 33 (454 aa).

A Protein kinase domain is found at 13–268; it reads YELGRTIGEG…IPEILEDEWF (256 aa). ATP contacts are provided by residues 19–27 and Lys-42; that span reads IGEGTFAKV. Asp-136 acts as the Proton acceptor in catalysis. Residues 154-183 are activation loop; that stretch reads DFGLSALSQQIKDDGLLHTTCGTPNYVAPE. In terms of domain architecture, NAF spans 305 to 329; that stretch reads EEPEALNAFELISMSAGLNLGNLFD. The segment at 335-364 is PPI; that stretch reads KRETRFTSKCPPKEIVRKIEEAAKPLGFDV.

It belongs to the protein kinase superfamily. CAMK Ser/Thr protein kinase family. SNF1 subfamily. Mn(2+) is required as a cofactor.

It carries out the reaction L-seryl-[protein] + ATP = O-phospho-L-seryl-[protein] + ADP + H(+). The catalysed reaction is L-threonyl-[protein] + ATP = O-phospho-L-threonyl-[protein] + ADP + H(+). Functionally, CIPK serine-threonine protein kinases interact with CBL proteins. Binding of a CBL protein to the regulatory NAF domain of CIPK protein lead to the activation of the kinase in a calcium-dependent manner. This is CBL-interacting protein kinase 33 (CIPK33) from Oryza sativa subsp. japonica (Rice).